A 445-amino-acid polypeptide reads, in one-letter code: Tubulin beta-1 chain (445 aa).

The MREI motif motif lies at 1–4; the sequence is MREI. Residues glutamine 11, glutamate 69, serine 138, glycine 142, threonine 143, glycine 144, asparagine 204, and asparagine 226 each coordinate GTP. A Mg(2+)-binding site is contributed by glutamate 69. The disordered stretch occupies residues 425–445; sequence YQDATAEEEGEFEEEGEEELA. Over residues 429-445 the composition is skewed to acidic residues; sequence TAEEEGEFEEEGEEELA. A 5-glutamyl polyglutamate modification is found at glutamate 438.

This sequence belongs to the tubulin family. In terms of assembly, dimer of alpha and beta chains. A typical microtubule is a hollow water-filled tube with an outer diameter of 25 nm and an inner diameter of 15 nM. Alpha-beta heterodimers associate head-to-tail to form protofilaments running lengthwise along the microtubule wall with the beta-tubulin subunit facing the microtubule plus end conferring a structural polarity. Microtubules usually have 13 protofilaments but different protofilament numbers can be found in some organisms and specialized cells. The cofactor is Mg(2+). Some glutamate residues at the C-terminus are polyglycylated, resulting in polyglycine chains on the gamma-carboxyl group. Glycylation is mainly limited to tubulin incorporated into axonemes (cilia and flagella) whereas glutamylation is prevalent in neuronal cells, centrioles, axonemes, and the mitotic spindle. Both modifications can coexist on the same protein on adjacent residues, and lowering polyglycylation levels increases polyglutamylation, and reciprocally. The precise function of polyglycylation is still unclear. In terms of processing, some glutamate residues at the C-terminus are polyglutamylated, resulting in polyglutamate chains on the gamma-carboxyl group. Polyglutamylation plays a key role in microtubule severing by spastin (SPAST). SPAST preferentially recognizes and acts on microtubules decorated with short polyglutamate tails: severing activity by SPAST increases as the number of glutamates per tubulin rises from one to eight, but decreases beyond this glutamylation threshold.

It localises to the cytoplasm. It is found in the cytoskeleton. Its function is as follows. Tubulin is the major constituent of microtubules, a cylinder consisting of laterally associated linear protofilaments composed of alpha- and beta-tubulin heterodimers. Microtubules grow by the addition of GTP-tubulin dimers to the microtubule end, where a stabilizing cap forms. Below the cap, tubulin dimers are in GDP-bound state, owing to GTPase activity of alpha-tubulin. The sequence is that of Tubulin beta-1 chain from Gadus morhua (Atlantic cod).